Here is a 122-residue protein sequence, read N- to C-terminus: Ribosome-binding factor A (122 aa).

This sequence belongs to the RbfA family. Monomer. Binds 30S ribosomal subunits, but not 50S ribosomal subunits or 70S ribosomes.

It localises to the cytoplasm. Its function is as follows. One of several proteins that assist in the late maturation steps of the functional core of the 30S ribosomal subunit. Associates with free 30S ribosomal subunits (but not with 30S subunits that are part of 70S ribosomes or polysomes). Required for efficient processing of 16S rRNA. May interact with the 5'-terminal helix region of 16S rRNA. The polypeptide is Ribosome-binding factor A (Burkholderia thailandensis (strain ATCC 700388 / DSM 13276 / CCUG 48851 / CIP 106301 / E264)).